Consider the following 197-residue polypeptide: Ribonuclease HII (197 aa).

In terms of domain architecture, RNase H type-2 spans 14–197; that stretch reads GIIAGVDEVG…RKNFAPIRIL (184 aa). A divalent metal cation-binding residues include D20, E21, and D112.

The protein belongs to the RNase HII family. It depends on Mn(2+) as a cofactor. Mg(2+) is required as a cofactor.

Its subcellular location is the cytoplasm. The catalysed reaction is Endonucleolytic cleavage to 5'-phosphomonoester.. Endonuclease that specifically degrades the RNA of RNA-DNA hybrids. In Wolbachia pipientis subsp. Culex pipiens (strain wPip), this protein is Ribonuclease HII.